Here is a 152-residue protein sequence, read N- to C-terminus: uncharacterized protein (152 aa).

The Cytoplasmic segment spans residues 1–5; sequence MWFPQ. Residues 6–26 form a helical membrane-spanning segment; the sequence is IIAGMAAGGAASAMTPGKVLF. The Extracellular portion of the chain corresponds to 27–38; the sequence is TNALGLGCSRSR. Residues 39 to 59 traverse the membrane as a helical segment; that stretch reads GLFLEMFGTAVLCFTVLMTAV. Over 60–65 the chain is Cytoplasmic; sequence EKRETN. Residues 66–86 traverse the membrane as a helical segment; that stretch reads FMAALPIGISLFMAHMALTGY. Topologically, residues 87–110 are extracellular; sequence TGTGVNPARSLGAAVAARYFPHYH. The short motif at 92 to 94 is the NPA element; that stretch reads NPA. The chain crosses the membrane as a helical span at residues 111–131; it reads WIYWISPLLGAFLAWSVWQLL. Residues 132 to 152 are Cytoplasmic-facing; the sequence is QILDYTTYVNAEKAAGQKKED.

It belongs to the MIP/aquaporin (TC 1.A.8) family.

Its subcellular location is the membrane. This is an uncharacterized protein from Saccharomyces cerevisiae (strain YJM789) (Baker's yeast).